Reading from the N-terminus, the 320-residue chain is Olfactory receptor 52W1 (320 aa).

Topologically, residues 1 to 30 (MAETLQLNSTFLHPNFFILTGFPGLGSAQT) are extracellular. N8 carries an N-linked (GlcNAc...) asparagine glycan. Residues 31 to 51 (WLTLVFGPIYLLALLGNGALP) form a helical membrane-spanning segment. Residues 52–59 (AVVWIDST) lie on the Cytoplasmic side of the membrane. Residues 60 to 80 (LHQPMFLLLAILAATDLGLAT) form a helical membrane-spanning segment. The Extracellular portion of the chain corresponds to 81–104 (SIAPGLLAVLWLGPRSVPYAVCLV). A helical membrane pass occupies residues 105–125 (QMFFVHALTAMESGVLLAMAC). Residues 126-144 (DRAAAIGRPLHYPVLVTKA) lie on the Cytoplasmic side of the membrane. A helical membrane pass occupies residues 145–165 (CVGYAALALALKAVAIVVPFP). Topologically, residues 166–201 (LLVAKFEHFQAKTIGHTYCAHMAVVELVVGNTQATN) are extracellular. The helical transmembrane segment at 202-222 (LYGLALSLAISGMDILGITGS) threads the bilayer. Topologically, residues 223 to 242 (YGLIAHAVLQLPTREAHAKA) are cytoplasmic. A helical transmembrane segment spans residues 243–263 (FGTCSSHICVILAFYIPGLFS). The Extracellular segment spans residues 264-279 (YLTHRFGHHTVPKPVH). Residues 280–300 (ILLSNIYLLLPPALNPLIYGA) traverse the membrane as a helical segment. At 301-320 (RTKQIRDRLLETFTFRKSPL) the chain is on the cytoplasmic side.

It belongs to the G-protein coupled receptor 1 family.

It localises to the cell membrane. Its function is as follows. Odorant receptor. This Homo sapiens (Human) protein is Olfactory receptor 52W1 (OR52W1).